A 318-amino-acid polypeptide reads, in one-letter code: tRNA-modifying protein YgfZ (318 aa).

Folate contacts are provided by tryptophan 24 and tryptophan 185.

This sequence belongs to the tRNA-modifying YgfZ family.

It localises to the cytoplasm. In terms of biological role, folate-binding protein involved in regulating the level of ATP-DnaA and in the modification of some tRNAs. It is probably a key factor in regulatory networks that act via tRNA modification, such as initiation of chromosomal replication. This chain is tRNA-modifying protein YgfZ, found in Buchnera aphidicola subsp. Baizongia pistaciae (strain Bp).